The following is a 209-amino-acid chain: Protein lin-28 homolog A (209 aa).

A disordered region spans residues 1-31; it reads MGSVSNQQFAGGCAKAAEKAPEEAPPDAARA. Position 2 is an N-acetylglycine (Gly2). Ser3 carries the post-translational modification Phosphoserine. A CSD domain is found at 39–112; the sequence is HGAGICKWFN…GLESIRVTGP (74 aa). Positions 113 to 136 are flexible linker; it reads GGVFCIGSERRPKGKNMQKRRSKG. Phosphoserine is present on Ser120. CCHC-type zinc fingers lie at residues 137-154 and 159-176; these read DRCY…ECKL and KKCH…SCPL. A disordered region spans residues 177–209; the sequence is KAQQGPSSQGKPAYFREEEEEIHSPALLPEAQN. Ser200 is subject to Phosphoserine.

It belongs to the lin-28 family. Monomer. During skeletal muscle differentiation, associated with translation initiation complexes in the polysomal compartment. Directly interacts with EIF3S2. Interacts with NCL in an RNA-dependent manner. Interacts with TUT4 in the presence of pre-let-7 RNA. In terms of tissue distribution, expressed in embryonic stem cells (ES cells), spermatagonia and testis. Expressed in numerous epithelial tissues including the epithelia of the small intestine, the intralobular duct epithelium of the mammary gland and the epithelia of Henle's loop in the kidney and in the collecting duct (at protein level). Also expressed in the myocardium and skeletal muscle (at protein level).

It localises to the cytoplasm. The protein localises to the rough endoplasmic reticulum. The protein resides in the P-body. Its subcellular location is the stress granule. It is found in the nucleus. It localises to the nucleolus. Its function is as follows. RNA-binding protein that inhibits processing of pre-let-7 miRNAs and regulates translation of mRNAs that control developmental timing, pluripotency and metabolism. Seems to recognize a common structural G-quartet (G4) feature in its miRNA and mRNA targets. 'Translational enhancer' that drives specific mRNAs to polysomes and increases the efficiency of protein synthesis. Its association with the translational machinery and target mRNAs results in an increased number of initiation events per molecule of mRNA and, indirectly, in mRNA stabilization. Binds IGF2 mRNA, MYOD1 mRNA, ARBP/36B4 ribosomal protein mRNA and its own mRNA. Essential for skeletal muscle differentiation program through the translational up-regulation of IGF2 expression. Suppressor of microRNA (miRNA) biogenesis, including that of let-7, miR107, miR-143 and miR-200c. Specifically binds the miRNA precursors (pre-miRNAs), recognizing an 5'-GGAG-3' motif found in pre-miRNA terminal loop, and recruits TUT4 and TUT7 uridylyltransferaseS. This results in the terminal uridylation of target pre-miRNAs. Uridylated pre-miRNAs fail to be processed by Dicer and undergo degradation. The repression of let-7 expression is required for normal development and contributes to maintain the pluripotent state by preventing let-7-mediated differentiation of embryonic stem cells. Localized to the periendoplasmic reticulum area, binds to a large number of spliced mRNAs and inhibits the translation of mRNAs destined for the ER, reducing the synthesis of transmembrane proteins, ER or Golgi lumen proteins, and secretory proteins. Binds to and enhances the translation of mRNAs for several metabolic enzymes, such as PFKP, PDHA1 or SDHA, increasing glycolysis and oxidative phosphorylation. Which, with the let-7 repression may enhance tissue repair in adult tissue. In Mus musculus (Mouse), this protein is Protein lin-28 homolog A (Lin28a).